Here is a 197-residue protein sequence, read N- to C-terminus: Zinc finger protein 581 (197 aa).

Residues 1–10 (MLVLPSPCPQ) are compositionally biased toward pro residues. The tract at residues 1-52 (MLVLPSPCPQPLAFSSVETMEGPPRRTCRSPEPGPSSSIGSPQASSPPRPNH) is disordered. The span at 35-44 (PSSSIGSPQA) shows a compositional bias: low complexity. C2H2-type zinc fingers lie at residues 87–109 (YSCP…SITH), 115–137 (FECD…HSIH), 145–167 (HGCP…SRVH), and 173–196 (FQCP…RWKH).

It localises to the nucleus. Its function is as follows. May be involved in transcriptional regulation. The sequence is that of Zinc finger protein 581 (ZNF581) from Homo sapiens (Human).